Reading from the N-terminus, the 508-residue chain is Glycerol kinase (508 aa).

Residue Thr-14 coordinates ADP. Residues Thr-14, Thr-15, and Ser-16 each contribute to the ATP site. Thr-14 is a binding site for sn-glycerol 3-phosphate. Residue Arg-18 coordinates ADP. Residues Arg-84, Glu-85, and Tyr-136 each contribute to the sn-glycerol 3-phosphate site. Glycerol-binding residues include Arg-84, Glu-85, and Tyr-136. His-232 carries the phosphohistidine; by HPr modification. Residue Asp-246 coordinates sn-glycerol 3-phosphate. Glycerol contacts are provided by Asp-246 and Gln-247. Thr-268 and Gly-311 together coordinate ADP. Residues Thr-268, Gly-311, Gln-315, and Gly-412 each coordinate ATP. The ADP site is built by Gly-412 and Asn-416.

Belongs to the FGGY kinase family. Homotetramer and homodimer (in equilibrium). Post-translationally, the phosphoenolpyruvate-dependent sugar phosphotransferase system (PTS), including enzyme I, and histidine-containing protein (HPr) are required for the phosphorylation, which leads to the activation of the enzyme.

The enzyme catalyses glycerol + ATP = sn-glycerol 3-phosphate + ADP + H(+). The protein operates within polyol metabolism; glycerol degradation via glycerol kinase pathway; sn-glycerol 3-phosphate from glycerol: step 1/1. With respect to regulation, activated by phosphorylation and inhibited by fructose 1,6-bisphosphate (FBP). Functionally, key enzyme in the regulation of glycerol uptake and metabolism. Catalyzes the phosphorylation of glycerol to yield sn-glycerol 3-phosphate. The chain is Glycerol kinase from Streptococcus pyogenes serotype M18 (strain MGAS8232).